A 425-amino-acid chain; its full sequence is Serine--tRNA ligase (425 aa).

Position 231–233 (threonine 231–glutamate 233) interacts with L-serine. Arginine 262 to glutamate 264 serves as a coordination point for ATP. Glutamate 285 contacts L-serine. Glutamate 349 to serine 352 is an ATP binding site. Serine 385 is a binding site for L-serine.

This sequence belongs to the class-II aminoacyl-tRNA synthetase family. Type-1 seryl-tRNA synthetase subfamily. As to quaternary structure, homodimer. The tRNA molecule binds across the dimer.

The protein resides in the cytoplasm. The enzyme catalyses tRNA(Ser) + L-serine + ATP = L-seryl-tRNA(Ser) + AMP + diphosphate + H(+). The catalysed reaction is tRNA(Sec) + L-serine + ATP = L-seryl-tRNA(Sec) + AMP + diphosphate + H(+). It participates in aminoacyl-tRNA biosynthesis; selenocysteinyl-tRNA(Sec) biosynthesis; L-seryl-tRNA(Sec) from L-serine and tRNA(Sec): step 1/1. Functionally, catalyzes the attachment of serine to tRNA(Ser). Is also able to aminoacylate tRNA(Sec) with serine, to form the misacylated tRNA L-seryl-tRNA(Sec), which will be further converted into selenocysteinyl-tRNA(Sec). The protein is Serine--tRNA ligase of Aquifex aeolicus (strain VF5).